A 520-amino-acid polypeptide reads, in one-letter code: ATP-dependent RNA helicase CshA (520 aa).

Residues 2–30 carry the Q motif motif; it reads TKFSEFGLDEKIVKSVNRMGFEEATPIQE. A Helicase ATP-binding domain is found at 33–203; the sequence is IPLGLEGKDL…ERFMHSPELI (171 aa). Position 46–53 (46–53) interacts with ATP; that stretch reads AQTGTGKT. A DEAD box motif is present at residues 151-154; sequence DEAD. A Helicase C-terminal domain is found at 214–374; the sequence is LIEQFFVKVH…PLQAPTWDEA (161 aa). Over residues 428–439 the composition is skewed to basic and acidic residues; the sequence is KTPVHITEERPL. Positions 428-520 are disordered; that stretch reads KTPVHITEER…NKGNYSQKSK (93 aa). 2 stretches are compositionally biased toward gly residues: residues 442 to 468 and 482 to 496; these read RGGG…GKGG and SGGG…GGGG.

Belongs to the DEAD box helicase family. CshA subfamily. Oligomerizes, may be a member of the RNA degradosome.

It localises to the cytoplasm. It carries out the reaction ATP + H2O = ADP + phosphate + H(+). Its function is as follows. DEAD-box RNA helicase possibly involved in RNA degradation. Unwinds dsRNA in both 5'- and 3'-directions, has RNA-dependent ATPase activity. Involved in cold tolerance, motility and alcohol tolerance. The polypeptide is ATP-dependent RNA helicase CshA (Listeria monocytogenes serovar 1/2a (strain ATCC BAA-679 / EGD-e)).